The chain runs to 171 residues: Antimicrobial protein CAP18 (171 aa).

The signal sequence occupies residues 1-29 (METHKHGPSLAWWSLLLLLLGLLMPPAIA). 2 cysteine pairs are disulfide-bonded: cysteine 85–cysteine 96 and cysteine 107–cysteine 124.

This sequence belongs to the cathelicidin family. Neutrophils.

It localises to the secreted. Functionally, CAP18 binds to the lipid A moiety of bacterial lipopolysaccharides (LPS), a glycolipid present in the outer membrane of all Gram-negative bacteria. Has antibiotic activity. This chain is Antimicrobial protein CAP18 (CAP18), found in Oryctolagus cuniculus (Rabbit).